The sequence spans 163 residues: Type-2 ice-structuring protein (163 aa).

An N-terminal signal peptide occupies residues 1-17; it reads MLTVSLLVCAMMALTQA. The propeptide occupies 18-34; that stretch reads NDDKILKGTATEAGPVS. Residues 39–163 form the C-type lectin domain; that stretch reads PNCPAGWQPL…SHKSVCAMTF (125 aa). 5 disulfide bridges follow: Cys-41–Cys-52, Cys-69–Cys-159, Cys-103–Cys-134, Cys-123–Cys-145, and Cys-135–Cys-151.

Post-translationally, the N-terminus is blocked.

It localises to the secreted. Antifreeze proteins lower the blood freezing point. The polypeptide is Type-2 ice-structuring protein (Hemitripterus americanus (Sea raven)).